Consider the following 515-residue polypeptide: Maturase K (515 aa).

It belongs to the intron maturase 2 family. MatK subfamily.

The protein localises to the plastid. It localises to the chloroplast. Its function is as follows. Usually encoded in the trnK tRNA gene intron. Probably assists in splicing its own and other chloroplast group II introns. The chain is Maturase K from Pinus banksiana (Jack pine).